The sequence spans 263 residues: Acyl-[acyl-carrier-protein]--UDP-N-acetylglucosamine O-acyltransferase (263 aa).

Belongs to the transferase hexapeptide repeat family. LpxA subfamily. As to quaternary structure, homotrimer.

The protein localises to the cytoplasm. It carries out the reaction a (3R)-hydroxyacyl-[ACP] + UDP-N-acetyl-alpha-D-glucosamine = a UDP-3-O-[(3R)-3-hydroxyacyl]-N-acetyl-alpha-D-glucosamine + holo-[ACP]. It participates in glycolipid biosynthesis; lipid IV(A) biosynthesis; lipid IV(A) from (3R)-3-hydroxytetradecanoyl-[acyl-carrier-protein] and UDP-N-acetyl-alpha-D-glucosamine: step 1/6. Involved in the biosynthesis of lipid A, a phosphorylated glycolipid that anchors the lipopolysaccharide to the outer membrane of the cell. In Xylella fastidiosa (strain Temecula1 / ATCC 700964), this protein is Acyl-[acyl-carrier-protein]--UDP-N-acetylglucosamine O-acyltransferase.